A 162-amino-acid polypeptide reads, in one-letter code: Circumsporozoite protein-related antigen (162 aa).

Positions 1 to 16 are cleaved as a signal peptide; it reads MKILSVFFLALFFIIF. Disordered regions lie at residues 24-44 and 109-162; these read KTNKGTGSGVSSKKKNKKGSG and PFKI…GPEH. A compositionally biased stretch (low complexity) spans 114–130; that stretch reads SSDPADNANPDADSESN. Over residues 137–162 the composition is skewed to polar residues; the sequence is PQVTAQDVTPEQPQGDDNNLVSGPEH.

In Plasmodium falciparum, this protein is Circumsporozoite protein-related antigen.